A 522-amino-acid chain; its full sequence is Zinc finger protein 329 (522 aa).

Residue Ser-30 is modified to Phosphoserine. C2H2-type zinc fingers lie at residues 184–206 (YKCAECGKCFKRNSSLVLHHRTH), 212–234 (YTCNDCGKSFSKNYNLIVHRRIH), 240–262 (YKCSKCGKAFSDGSALTQHQRIH), 268–290 (YACLDCGKTFNRNSSLILHQRTH), 296–318 (YRCNECGKPFTDISHLTVHLRIH), 324–346 (YECSRCGKAFRDGSYLTQHERTH), 352–374 (FECVECGKSFSRNSHLIVHQKIH), 380–402 (YECKECGKTFIESAYLIRHQRVH), 408–430 (YGCNQCRKLFRNIAGLIRHQRIH), 436–458 (YECNQCGKAFRDSSCLTKHQRIH), 464–486 (YQCLKCGKSFRQNTHLVVHQRLH), and 492–514 (SQCPHCGKIFRRSWCLARHQRTH).

It belongs to the krueppel C2H2-type zinc-finger protein family.

The protein localises to the nucleus. May be involved in transcriptional regulation. The sequence is that of Zinc finger protein 329 (Znf329) from Mus musculus (Mouse).